Consider the following 482-residue polypeptide: Cardiolipin synthase (482 aa).

Helical transmembrane passes span 4–24 and 34–54; these read LAYLLVVLLILNVFFAAVTVF and WAWLLVLTFVPIFGFIIYLIF. PLD phosphodiesterase domains follow at residues 217–244 and 395–422; these read LNYRNHRKLAIIDGDISYIGGFNIGDEY and DNGFIHAKTLVVDGEIASVGTANMDFRS. Residues H222, K224, D229, H400, K402, and D407 contribute to the active site.

The protein belongs to the phospholipase D family. Cardiolipin synthase subfamily.

The protein localises to the cell membrane. The enzyme catalyses 2 a 1,2-diacyl-sn-glycero-3-phospho-(1'-sn-glycerol) = a cardiolipin + glycerol. Catalyzes the reversible phosphatidyl group transfer from one phosphatidylglycerol molecule to another to form cardiolipin (CL) (diphosphatidylglycerol) and glycerol. In Listeria welshimeri serovar 6b (strain ATCC 35897 / DSM 20650 / CCUG 15529 / CIP 8149 / NCTC 11857 / SLCC 5334 / V8), this protein is Cardiolipin synthase (cls).